The primary structure comprises 540 residues: L-aspartate oxidase (540 aa).

FAD contacts are provided by residues 16 to 19 (SGAA), Lys38, 45 to 52 (STFYAQGG), 161 to 162 (NA), and Asp223. Succinate contacts are provided by residues His244 and 259–260 (TE). Arg290 acts as the Proton donor/acceptor in catalysis. Glu375 is a binding site for FAD. Ser389 provides a ligand contact to succinate. 391-392 (SL) serves as a coordination point for FAD.

It belongs to the FAD-dependent oxidoreductase 2 family. NadB subfamily. In terms of assembly, monomer. Homodimer. Both the monomeric and dimeric forms of the enzyme are catalytically active. Requires FAD as cofactor.

The protein resides in the cytoplasm. The catalysed reaction is L-aspartate + O2 = iminosuccinate + H2O2. The enzyme catalyses fumarate + L-aspartate = iminosuccinate + succinate. Its pathway is cofactor biosynthesis; NAD(+) biosynthesis; iminoaspartate from L-aspartate (oxidase route): step 1/1. Its activity is regulated as follows. Inhibited by the product iminoaspartate. Competitively inhibited by mesotartrate. NAD acts as a competitive inhibitor to FAD. Inhibited by iodoacetic acid, diethylpyrocarbonate and tetranitromethane. Functionally, catalyzes the oxidation of L-aspartate to iminoaspartate, the first step in the de novo biosynthesis of NAD(+). Can use either oxygen or fumarate as electron acceptors, which allows the enzyme to be functional under aerobic and anaerobic conditions. In vivo, fumarate is used under anaerobic conditions, and oxygen is the predominant electron acceptor under aerobic conditions due to the lower fumarate levels. In vitro, fumarate is a more efficient electron acceptor and is kinetically superior to oxygen. The chain is L-aspartate oxidase from Escherichia coli (strain K12).